Consider the following 415-residue polypeptide: Phosphoglycerate kinase (415 aa).

Substrate-binding positions include 27–29 (DVN), R44, 67–70 (HQGR), R124, and R164. Residues E336 and 362–365 (GGHM) each bind ATP.

Belongs to the phosphoglycerate kinase family. In terms of assembly, monomer.

Its subcellular location is the cytoplasm. The catalysed reaction is (2R)-3-phosphoglycerate + ATP = (2R)-3-phospho-glyceroyl phosphate + ADP. It participates in carbohydrate degradation; glycolysis; pyruvate from D-glyceraldehyde 3-phosphate: step 2/5. This is Phosphoglycerate kinase from Sulfolobus acidocaldarius (strain ATCC 33909 / DSM 639 / JCM 8929 / NBRC 15157 / NCIMB 11770).